The sequence spans 485 residues: E3 ubiquitin-protein ligase TRIM58 (485 aa).

An RING-type zinc finger spans residues 15–59 (CSVCLDFLQEPISVDCGHSFCLRCISEFCEKSDSAQGVYACPQCR). The segment at 90-131 (AGSRQCARHGEDLSHFCEEDQTMLCWVCDTSPEHRSHRTETL) adopts a B box-type zinc-finger fold. Positions 95, 98, 117, and 123 each coordinate Zn(2+). The stretch at 192–241 (LAQEEQLQLRRLEEEERATLQRLRDSRNRLAQQNKALKELAEELEERSQR) forms a coiled coil. The 196-residue stretch at 271 to 466 (DLKTVCRIPG…LPPMTEAAPG (196 aa)) folds into the B30.2/SPRY domain.

This sequence belongs to the TRIM/RBCC family. Expressed in erythroblasts.

The catalysed reaction is S-ubiquitinyl-[E2 ubiquitin-conjugating enzyme]-L-cysteine + [acceptor protein]-L-lysine = [E2 ubiquitin-conjugating enzyme]-L-cysteine + N(6)-ubiquitinyl-[acceptor protein]-L-lysine.. It functions in the pathway protein modification; protein ubiquitination. E3 ubiquitin ligase induced during late erythropoiesis. Directly binds and ubiquitinates the intermediate chain of the microtubule motor dynein (DYNC1LI1/DYNC1LI2), stimulating the degradation of the dynein holoprotein complex. May participate in the erythroblast enucleation process through regulation of nuclear polarization. The chain is E3 ubiquitin-protein ligase TRIM58 (Trim58) from Mus musculus (Mouse).